The chain runs to 73 residues: Sec-independent protein translocase protein TatA (73 aa).

The helical transmembrane segment at 1–21 (MGSFSIWHWLIVLVIVMLVFG) threads the bilayer. The segment at 44 to 73 (KSAEDPNEQIPQSTTTAEKTVDVQAKDINK) is disordered. Over residues 52–61 (QIPQSTTTAE) the composition is skewed to polar residues. Residues 62 to 73 (KTVDVQAKDINK) show a composition bias toward basic and acidic residues.

It belongs to the TatA/E family. As to quaternary structure, the Tat system comprises two distinct complexes: a TatABC complex, containing multiple copies of TatA, TatB and TatC subunits, and a separate TatA complex, containing only TatA subunits. Substrates initially bind to the TatABC complex, which probably triggers association of the separate TatA complex to form the active translocon.

The protein localises to the cell inner membrane. In terms of biological role, part of the twin-arginine translocation (Tat) system that transports large folded proteins containing a characteristic twin-arginine motif in their signal peptide across membranes. TatA could form the protein-conducting channel of the Tat system. The sequence is that of Sec-independent protein translocase protein TatA from Polynucleobacter asymbioticus (strain DSM 18221 / CIP 109841 / QLW-P1DMWA-1) (Polynucleobacter necessarius subsp. asymbioticus).